We begin with the raw amino-acid sequence, 158 residues long: 3-hydroxyacyl-[acyl-carrier-protein] dehydratase FabZ (158 aa).

H61 is a catalytic residue.

The protein belongs to the thioester dehydratase family. FabZ subfamily.

The protein localises to the cytoplasm. The catalysed reaction is a (3R)-hydroxyacyl-[ACP] = a (2E)-enoyl-[ACP] + H2O. In terms of biological role, involved in unsaturated fatty acids biosynthesis. Catalyzes the dehydration of short chain beta-hydroxyacyl-ACPs and long chain saturated and unsaturated beta-hydroxyacyl-ACPs. In Methylobacterium radiotolerans (strain ATCC 27329 / DSM 1819 / JCM 2831 / NBRC 15690 / NCIMB 10815 / 0-1), this protein is 3-hydroxyacyl-[acyl-carrier-protein] dehydratase FabZ.